The sequence spans 550 residues: Chaperonin GroEL 1 (550 aa).

ATP-binding positions include 30-33 (TLGP), K51, 87-91 (DGTTT), G415, and D496.

It belongs to the chaperonin (HSP60) family. As to quaternary structure, forms a cylinder of 14 subunits composed of two heptameric rings stacked back-to-back. Interacts with the co-chaperonin GroES.

It is found in the cytoplasm. It carries out the reaction ATP + H2O + a folded polypeptide = ADP + phosphate + an unfolded polypeptide.. Its function is as follows. Together with its co-chaperonin GroES, plays an essential role in assisting protein folding. The GroEL-GroES system forms a nano-cage that allows encapsulation of the non-native substrate proteins and provides a physical environment optimized to promote and accelerate protein folding. The protein is Chaperonin GroEL 1 of Rhodopseudomonas palustris (strain HaA2).